The chain runs to 446 residues: Nuclear distribution protein nudF (446 aa).

In terms of domain architecture, LisH spans 9–41; sequence QAEELHKSMVAYLSSIKASQSSNTLREELGIGD. The stretch at 60-86 forms a coiled coil; the sequence is TGIARLQRKILDLESKITSLQAELDSV. WD repeat units lie at residues 113-154, 156-196, 200-240, 243-282, 285-345, 347-386, 391-430, and 432-446; these read SHRD…RTLK, HMRG…ANIR, GHDH…CVRT, SNSI…PRAA, GHDN…IKTL, GHDN…RLVK, AHGH…PAFQ, and VIAT…RVFK.

It belongs to the WD repeat LIS1/nudF family. Self-associates. Interacts with nudE and dynein.

It localises to the cytoplasm. The protein localises to the cytoskeleton. The protein resides in the spindle pole. Positively regulates the activity of the minus-end directed microtubule motor protein dynein. May enhance dynein-mediated microtubule sliding by targeting dynein to the microtubule plus end. Required for nuclear migration during vegetative growth as well as development. Required for retrograde early endosome (EE) transport from the hyphal tip. Required for localization of dynein to the mitotic spindle poles. Recruits additional proteins to the dynein complex at SPBs. The sequence is that of Nuclear distribution protein nudF from Aspergillus terreus (strain NIH 2624 / FGSC A1156).